Consider the following 528-residue polypeptide: D-3-phosphoglycerate dehydrogenase (528 aa).

NAD(+) is bound by residues 151 to 152 (RI), D171, 230 to 232 (AAR), and D256. The active site involves R232. E261 is a catalytic residue. H279 functions as the Proton donor in the catalytic mechanism. An NAD(+)-binding site is contributed by 279-282 (HLGA). Residues 455 to 528 (NLVIRYVDQP…ANKLEVVNLS (74 aa)) enclose the ACT domain.

This sequence belongs to the D-isomer specific 2-hydroxyacid dehydrogenase family.

The catalysed reaction is (2R)-3-phosphoglycerate + NAD(+) = 3-phosphooxypyruvate + NADH + H(+). It carries out the reaction (R)-2-hydroxyglutarate + NAD(+) = 2-oxoglutarate + NADH + H(+). Its pathway is amino-acid biosynthesis; L-serine biosynthesis; L-serine from 3-phospho-D-glycerate: step 1/3. In terms of biological role, catalyzes the reversible oxidation of 3-phospho-D-glycerate to 3-phosphonooxypyruvate, the first step of the phosphorylated L-serine biosynthesis pathway. Also catalyzes the reversible oxidation of 2-hydroxyglutarate to 2-oxoglutarate. The polypeptide is D-3-phosphoglycerate dehydrogenase (serA) (Mycobacterium leprae (strain TN)).